The following is a 488-amino-acid chain: Glutamyl-tRNA(Gln) amidotransferase subunit A (488 aa).

Catalysis depends on charge relay system residues Lys77 and Ser152. Residue Ser176 is the Acyl-ester intermediate of the active site.

This sequence belongs to the amidase family. GatA subfamily. In terms of assembly, heterotrimer of A, B and C subunits.

The catalysed reaction is L-glutamyl-tRNA(Gln) + L-glutamine + ATP + H2O = L-glutaminyl-tRNA(Gln) + L-glutamate + ADP + phosphate + H(+). In terms of biological role, allows the formation of correctly charged Gln-tRNA(Gln) through the transamidation of misacylated Glu-tRNA(Gln) in organisms which lack glutaminyl-tRNA synthetase. The reaction takes place in the presence of glutamine and ATP through an activated gamma-phospho-Glu-tRNA(Gln). The chain is Glutamyl-tRNA(Gln) amidotransferase subunit A from Streptococcus pneumoniae serotype 19F (strain G54).